The sequence spans 1678 residues: Clathrin heavy chain (1678 aa).

WD40-like repeat regions lie at residues 24–67 (SFSF…RPIS), 68–107 (ADSA…MNED), 108–149 (VVFW…SSLN), 150–195 (GCQI…QAIE), 196–257 (GHAA…PEAQ), 258–301 (NDFP…ISAD), and 302–330 (TIFV…VTVD). CHCR repeat units lie at residues 538 to 684 (VAEE…QICV), 687 to 829 (ATKY…SEDI), 834 to 973 (ILVV…QLID), 980 to 1125 (LSET…VKEA), 1129 to 1270 (YIKA…FRLA), 1275 to 1421 (LHIV…LLLN), and 1424 to 1567 (LLVL…YDCF). The tract at residues 1334–1643 (REHLELFWSR…IQMEPQLMIT (310 aa)) is involved in binding clathrin light chain. The trimerization stretch occupies residues 1552-1677 (EELLGWFLER…AGGRNMGYPY (126 aa)).

This sequence belongs to the clathrin heavy chain family. As to quaternary structure, clathrin triskelions, composed of 3 heavy chains and 3 light chains, are the basic subunits of the clathrin coat. Interacts with sau.

Its subcellular location is the cytoplasmic vesicle membrane. The protein localises to the membrane. The protein resides in the coated pit. Its function is as follows. Clathrin is the major protein of the polyhedral coat of coated pits and vesicles. The protein is Clathrin heavy chain (Chc) of Drosophila melanogaster (Fruit fly).